Reading from the N-terminus, the 88-residue chain is UPF0250 protein IL0958 (88 aa).

Belongs to the UPF0250 family.

This Idiomarina loihiensis (strain ATCC BAA-735 / DSM 15497 / L2-TR) protein is UPF0250 protein IL0958.